The sequence spans 292 residues: Hydroxysqualene synthase (292 aa).

It belongs to the phytoene/squalene synthase family. HpnC subfamily.

It carries out the reaction presqualene diphosphate + H2O = hydroxysqualene + diphosphate. Its pathway is secondary metabolite biosynthesis; hopanoid biosynthesis. In terms of biological role, involved in the biosynthesis of the hopanoid precursor squalene (SQ) from farnesyl diphosphate (FPP). Catalyzes the second step, the conversion of presqualene diphosphate (PSPP) to hydroxysqualene (HSQ). The protein is Hydroxysqualene synthase of Rhodopseudomonas palustris (strain ATCC BAA-98 / CGA009).